Reading from the N-terminus, the 328-residue chain is Sin3 histone deacetylase corepressor complex component SDS3 (328 aa).

The span at 1–16 (MSAAGLLAPAPAQAGA) shows a compositional bias: low complexity. A disordered region spans residues 1–65 (MSAAGLLAPA…DLAKHDEEDY (65 aa)). Ser-2 is subject to N-acetylserine. Residues 2–170 (SAAGLLAPAP…IENEKLTMEL (169 aa)) form a mediates interaction with USP17L2 region. 2 stretches are compositionally biased toward acidic residues: residues 23-37 (YPEE…EEDE) and 45-54 (SDEDTEDASE). Phosphoserine is present on residues Ser-32 and Ser-45. At Thr-49 the chain carries Phosphothreonine. At Ser-53 the chain carries Phosphoserine. Positions 56–65 (DLAKHDEEDY) are enriched in basic and acidic residues. Positions 66–171 (VEMKEQMYQD…ENEKLTMELT (106 aa)) form a coiled coil. Residues Lys-69, Lys-178, and Lys-201 each participate in a glycyl lysine isopeptide (Lys-Gly) (interchain with G-Cter in SUMO2) cross-link. The sin3 interaction domain (SID) stretch occupies residues 188–226 (RPNDPVPIPDKRRKPAPAQLNYLLTDEQIMEDLRTLNKL). The segment at 226-252 (LKSPKRPASPSSPEHLPATPAESPAQR) is disordered. Residues Ser-228, Ser-234, and Ser-237 each carry the phosphoserine modification. At Thr-244 the chain carries Phosphothreonine.

This sequence belongs to the SDS3 family. Interacts with HCFC1. Homodimer. Component of the SIN3 histone deacetylase (HDAC) corepressor complex. Interacts with SIN3A. Interaction with SIN3B enhances the interaction between SIN3B and HDAC1 to form a complex. Component of a mSin3A corepressor complex that contains SIN3A, SAP130, SUDS3/SAP45, ARID4B/SAP180, HDAC1 and HDAC2. Interacts with USP17L2; the interaction is direct. Interacts with FOXK2. Post-translationally, polyubiquitinated. 'Lys-63'-polyubiquitinated SUDS3 positively regulates histone deacetylation. Regulated through deubiquitination by USP17L2/USP17 that cleaves 'Lys-63'-linked ubiquitin chains.

The protein resides in the nucleus. Functionally, regulatory protein which represses transcription and augments histone deacetylase activity of HDAC1. May have a potential role in tumor suppressor pathways through regulation of apoptosis. May function in the assembly and/or enzymatic activity of the mSin3A corepressor complex or in mediating interactions between the complex and other regulatory complexes. The sequence is that of Sin3 histone deacetylase corepressor complex component SDS3 (SUDS3) from Pongo abelii (Sumatran orangutan).